Here is a 729-residue protein sequence, read N- to C-terminus: Catalase-peroxidase (729 aa).

The disordered stretch occupies residues 1-20; that stretch reads MHNGSNGSVEQRDSMPETSR. Basic and acidic residues predominate over residues 10 to 20; the sequence is EQRDSMPETSR. Residues 91 to 214 constitute a cross-link (tryptophyl-tyrosyl-methioninium (Trp-Tyr) (with M-240)); the sequence is WHAAGTYRTT…LGATVMGLIY (124 aa). H92 (proton acceptor) is an active-site residue. The tryptophyl-tyrosyl-methioninium (Tyr-Met) (with W-91) cross-link spans 214-240; it reads YVNPEGPESTPDPEWSAQRIRKSFGRM. Residue H255 participates in heme b binding.

Belongs to the peroxidase family. Peroxidase/catalase subfamily. In terms of assembly, homodimer or homotetramer. Heme b serves as cofactor. Post-translationally, formation of the three residue Trp-Tyr-Met cross-link is important for the catalase, but not the peroxidase activity of the enzyme.

It catalyses the reaction H2O2 + AH2 = A + 2 H2O. The enzyme catalyses 2 H2O2 = O2 + 2 H2O. Functionally, bifunctional enzyme with both catalase and broad-spectrum peroxidase activity. This chain is Catalase-peroxidase, found in Salinibacter ruber (strain DSM 13855 / M31).